Reading from the N-terminus, the 58-residue chain is Large ribosomal subunit protein bL32 (58 aa).

Residues 1–23 (MAVPARHTSSAKKNRRRTHYKLT) are disordered. The segment covering 9-20 (SSAKKNRRRTHY) has biased composition (basic residues).

It belongs to the bacterial ribosomal protein bL32 family.

The protein is Large ribosomal subunit protein bL32 (rpmF) of Lactococcus lactis subsp. cremoris (Streptococcus cremoris).